Here is an 85-residue protein sequence, read N- to C-terminus: MTPLAHILALPVRAYRLIFSPWVGFNCRYQPTCSAYALEALEKHGALRGSWLAARRIGRCHPLGSDGYDPVPEPKDRKPPHSPAG.

A disordered region spans residues 62-85 (PLGSDGYDPVPEPKDRKPPHSPAG).

It belongs to the UPF0161 family.

It is found in the cell inner membrane. In terms of biological role, could be involved in insertion of integral membrane proteins into the membrane. The sequence is that of Putative membrane protein insertion efficiency factor from Ruegeria pomeroyi (strain ATCC 700808 / DSM 15171 / DSS-3) (Silicibacter pomeroyi).